We begin with the raw amino-acid sequence, 131 residues long: UPF0102 protein Ent638_3585 (131 aa).

A disordered region spans residues 1-20 (MAQIPAGADRPGKLSRKQTG).

Belongs to the UPF0102 family.

This is UPF0102 protein Ent638_3585 from Enterobacter sp. (strain 638).